The sequence spans 139 residues: Large ribosomal subunit protein uL13 (139 aa).

The protein belongs to the universal ribosomal protein uL13 family. Part of the 50S ribosomal subunit.

Its function is as follows. This protein is one of the early assembly proteins of the 50S ribosomal subunit, although it is not seen to bind rRNA by itself. It is important during the early stages of 50S assembly. The chain is Large ribosomal subunit protein uL13 from Aliarcobacter butzleri (strain RM4018) (Arcobacter butzleri).